The chain runs to 151 residues: Cell division protein SepF (151 aa).

Belongs to the SepF family. In terms of assembly, homodimer. Interacts with FtsZ.

The protein resides in the cytoplasm. Functionally, cell division protein that is part of the divisome complex and is recruited early to the Z-ring. Probably stimulates Z-ring formation, perhaps through the cross-linking of FtsZ protofilaments. Its function overlaps with FtsA. The chain is Cell division protein SepF from Desulfitobacterium hafniense (strain Y51).